The following is a 92-amino-acid chain: Cell division protein FtsB (92 aa).

Residues 1 to 3 (MRL) are Cytoplasmic-facing. A helical membrane pass occupies residues 4–21 (FIFLLVAVLLLFQYDFWF). Residues 22–92 (GKNGYLDYKR…IFYHIVKEQK (71 aa)) lie on the Periplasmic side of the membrane. A coiled-coil region spans residues 26-74 (YLDYKRTAQQIAQHKQENEKLSQRNQVVAAEIKDLKQGVEAIEERARFQ).

Belongs to the FtsB family. As to quaternary structure, part of a complex composed of FtsB, FtsL and FtsQ.

The protein resides in the cell inner membrane. Its function is as follows. Essential cell division protein. May link together the upstream cell division proteins, which are predominantly cytoplasmic, with the downstream cell division proteins, which are predominantly periplasmic. This is Cell division protein FtsB from Pasteurella multocida (strain Pm70).